A 188-amino-acid chain; its full sequence is UPF0398 protein SSP1297 (188 aa).

The protein belongs to the UPF0398 family.

The protein is UPF0398 protein SSP1297 of Staphylococcus saprophyticus subsp. saprophyticus (strain ATCC 15305 / DSM 20229 / NCIMB 8711 / NCTC 7292 / S-41).